Reading from the N-terminus, the 683-residue chain is Cysteine-rich receptor-like protein kinase 28 (683 aa).

Positions 1-24 (MEHVRVIFFFFACVLKIVPFICLA) are cleaved as a signal peptide. Over 25–288 (QKDKYEFPPG…RTGKGKGGSK (264 aa)) the chain is Extracellular. Gnk2-homologous domains follow at residues 32–136 (PPGF…NMII) and 142–251 (TTPT…TWRF). N43, N47, N73, and N153 each carry an N-linked (GlcNAc...) asparagine glycan. Positions 263–283 (PAIQPADSPTSAARTERTGKG) are disordered. The helical transmembrane segment at 289-309 (VIVAIVIPIVFVALFAICLCL) threads the bilayer. Over 310-683 (LLKWKKNKSV…DVTVSELSPR (374 aa)) the chain is Cytoplasmic. One can recognise a Protein kinase domain in the interval 361-641 (FSPENELGRG…ALMLNSYSYT (281 aa)). Residues 367-375 (LGRGGFGSV) and K389 each bind ATP. Y434 is modified (phosphotyrosine). D486 (proton acceptor) is an active-site residue. The residue at position 490 (S490) is a Phosphoserine. Phosphothreonine is present on T528. Y536 carries the phosphotyrosine modification.

This sequence belongs to the protein kinase superfamily. Ser/Thr protein kinase family. CRK subfamily.

It is found in the membrane. It carries out the reaction L-seryl-[protein] + ATP = O-phospho-L-seryl-[protein] + ADP + H(+). It catalyses the reaction L-threonyl-[protein] + ATP = O-phospho-L-threonyl-[protein] + ADP + H(+). The protein is Cysteine-rich receptor-like protein kinase 28 (CRK28) of Arabidopsis thaliana (Mouse-ear cress).